The chain runs to 503 residues: Alpha-1,3/1,6-mannosyltransferase ALG2 (503 aa).

Asn59, Asn173, Asn262, and Asn403 each carry an N-linked (GlcNAc...) asparagine glycan. 2 helical membrane-spanning segments follow: residues 444–466 (LWST…LITG) and 473–495 (LLLA…WIIV). Residue Asn500 is glycosylated (N-linked (GlcNAc...) asparagine).

It belongs to the glycosyltransferase group 1 family.

Its subcellular location is the endoplasmic reticulum membrane. It catalyses the reaction a beta-D-Man-(1-&gt;4)-beta-D-GlcNAc-(1-&gt;4)-alpha-D-GlcNAc-diphospho-di-trans,poly-cis-dolichol + GDP-alpha-D-mannose = an alpha-D-Man-(1-&gt;3)-beta-D-Man-(1-&gt;4)-beta-D-GlcNAc-(1-&gt;4)-alpha-D-GlcNAc-diphospho-di-trans,poly-cis-dolichol + GDP + H(+). The enzyme catalyses an alpha-D-Man-(1-&gt;3)-beta-D-Man-(1-&gt;4)-beta-D-GlcNAc-(1-&gt;4)-alpha-D-GlcNAc-diphospho-di-trans,poly-cis-dolichol + GDP-alpha-D-mannose = an alpha-D-Man-(1-&gt;3)-[alpha-D-Man-(1-&gt;6)]-beta-D-Man-(1-&gt;4)-beta-D-GlcNAc-(1-&gt;4)-alpha-D-GlcNAc-diphospho-di-trans,poly-cis-dolichol + GDP + H(+). The protein operates within protein modification; protein glycosylation. Its function is as follows. Mannosylates Man(2)GlcNAc(2)-dolichol diphosphate and Man(1)GlcNAc(2)-dolichol diphosphate to form Man(3)GlcNAc(2)-dolichol diphosphate. This Kluyveromyces lactis (strain ATCC 8585 / CBS 2359 / DSM 70799 / NBRC 1267 / NRRL Y-1140 / WM37) (Yeast) protein is Alpha-1,3/1,6-mannosyltransferase ALG2 (ALG2).